A 154-amino-acid chain; its full sequence is 3-hydroxyacyl-[acyl-carrier-protein] dehydratase FabZ (154 aa).

His-54 is an active-site residue.

It belongs to the thioester dehydratase family. FabZ subfamily.

Its subcellular location is the cytoplasm. The enzyme catalyses a (3R)-hydroxyacyl-[ACP] = a (2E)-enoyl-[ACP] + H2O. In terms of biological role, involved in unsaturated fatty acids biosynthesis. Catalyzes the dehydration of short chain beta-hydroxyacyl-ACPs and long chain saturated and unsaturated beta-hydroxyacyl-ACPs. This Chlamydia caviae (strain ATCC VR-813 / DSM 19441 / 03DC25 / GPIC) (Chlamydophila caviae) protein is 3-hydroxyacyl-[acyl-carrier-protein] dehydratase FabZ.